Reading from the N-terminus, the 163-residue chain is Pheromone-binding protein (163 aa).

The signal sequence occupies residues 1–22; that stretch reads MMSVRLMLVVAVWLCLRVDASQ. 3 disulfides stabilise this stretch: Cys39–Cys74, Cys70–Cys129, and Cys117–Cys138.

The protein belongs to the PBP/GOBP family. In terms of tissue distribution, antenna.

Functionally, this major soluble protein in olfactory sensilla of male moths might serve to solubilize the extremely hydrophobic pheromone molecules and to transport pheromone through the aqueous lymph to receptors located on olfactory cilia. The sequence is that of Pheromone-binding protein from Heliothis virescens (Tobacco budworm moth).